The sequence spans 269 residues: Tryptophan synthase alpha chain (269 aa).

Catalysis depends on proton acceptor residues Glu49 and Asp60.

The protein belongs to the TrpA family. Tetramer of two alpha and two beta chains.

It catalyses the reaction (1S,2R)-1-C-(indol-3-yl)glycerol 3-phosphate + L-serine = D-glyceraldehyde 3-phosphate + L-tryptophan + H2O. The protein operates within amino-acid biosynthesis; L-tryptophan biosynthesis; L-tryptophan from chorismate: step 5/5. In terms of biological role, the alpha subunit is responsible for the aldol cleavage of indoleglycerol phosphate to indole and glyceraldehyde 3-phosphate. In Histophilus somni (strain 2336) (Haemophilus somnus), this protein is Tryptophan synthase alpha chain.